A 394-amino-acid chain; its full sequence is Protein-glutamate methylesterase/protein-glutamine glutaminase (394 aa).

Residues 1 to 24 (MSDGFGRPPPPAPAGHPTGAAGGD) form a disordered region. Residues 15–24 (GHPTGAAGGD) are compositionally biased toward low complexity. In terms of domain architecture, Response regulatory spans 27–145 (RVMVVDDSAV…EIGGADAFKR (119 aa)). The residue at position 78 (Asp78) is a 4-aspartylphosphate. Positions 191–393 (PAPAVGSVGQ…PYIRKFASRA (203 aa)) constitute a CheB-type methylesterase domain. Residues Ser211, His238, and Asp335 contribute to the active site.

Belongs to the CheB family. Post-translationally, phosphorylated by CheA. Phosphorylation of the N-terminal regulatory domain activates the methylesterase activity.

The protein resides in the cytoplasm. It catalyses the reaction [protein]-L-glutamate 5-O-methyl ester + H2O = L-glutamyl-[protein] + methanol + H(+). The catalysed reaction is L-glutaminyl-[protein] + H2O = L-glutamyl-[protein] + NH4(+). Functionally, involved in chemotaxis. Part of a chemotaxis signal transduction system that modulates chemotaxis in response to various stimuli. Catalyzes the demethylation of specific methylglutamate residues introduced into the chemoreceptors (methyl-accepting chemotaxis proteins or MCP) by CheR. Also mediates the irreversible deamidation of specific glutamine residues to glutamic acid. In Azospirillum brasilense, this protein is Protein-glutamate methylesterase/protein-glutamine glutaminase.